Reading from the N-terminus, the 152-residue chain is D-aminoacyl-tRNA deacylase (152 aa).

Positions 142–143 match the Gly-cisPro motif, important for rejection of L-amino acids motif; it reads GP.

This sequence belongs to the DTD family. As to quaternary structure, homodimer.

Its subcellular location is the cytoplasm. It carries out the reaction glycyl-tRNA(Ala) + H2O = tRNA(Ala) + glycine + H(+). The catalysed reaction is a D-aminoacyl-tRNA + H2O = a tRNA + a D-alpha-amino acid + H(+). Its function is as follows. An aminoacyl-tRNA editing enzyme that deacylates mischarged D-aminoacyl-tRNAs. Also deacylates mischarged glycyl-tRNA(Ala), protecting cells against glycine mischarging by AlaRS. Acts via tRNA-based rather than protein-based catalysis; rejects L-amino acids rather than detecting D-amino acids in the active site. By recycling D-aminoacyl-tRNA to D-amino acids and free tRNA molecules, this enzyme counteracts the toxicity associated with the formation of D-aminoacyl-tRNA entities in vivo and helps enforce protein L-homochirality. The polypeptide is D-aminoacyl-tRNA deacylase (Burkholderia ambifaria (strain ATCC BAA-244 / DSM 16087 / CCUG 44356 / LMG 19182 / AMMD) (Burkholderia cepacia (strain AMMD))).